Reading from the N-terminus, the 539-residue chain is Copine-C (539 aa).

2 consecutive C2 domains span residues 1-120 (MIPS…KIVA) and 128-251 (VTGK…PLIN). The Ca(2+) site is built by L23, D24, D30, D83, D85, and D98. The region spanning 290–507 (SLMTAIDCTG…ALAQETLKEI (218 aa)) is the VWFA domain.

It belongs to the copine family. It depends on Ca(2+) as a cofactor.

The polypeptide is Copine-C (cpnC) (Dictyostelium discoideum (Social amoeba)).